Here is a 154-residue protein sequence, read N- to C-terminus: Transcriptional repressor NrdR (154 aa).

The segment at 3–34 is a zinc-finger region; the sequence is CPFCAHPDTRVADSRLMEERNAVRRRRHCPNC. Residues 49–139 form the ATP-cone domain; sequence PAVIGPDKKR…LHKRFDNPAD (91 aa).

The protein belongs to the NrdR family. Zn(2+) serves as cofactor.

In terms of biological role, negatively regulates transcription of bacterial ribonucleotide reductase nrd genes and operons by binding to NrdR-boxes. In Neisseria meningitidis serogroup B (strain ATCC BAA-335 / MC58), this protein is Transcriptional repressor NrdR.